Consider the following 149-residue polypeptide: MNSQDTFKFAETHEWADQEDDGLIWVGISNHAQEALGDVMFFQAPKLDQQVKQGEAIAVIESVKAASDIHAPVSGEIVALNEEVDASPELVNEEPYGIWLFKINRPLMRFLYPTRCALEFRKILCRPWRLIIKLKWGRAQLTSECGLLC.

Residues 23 to 104 (LIWVGISNHA…PYGIWLFKIN (82 aa)) enclose the Lipoyl-binding domain. Position 64 is an N6-lipoyllysine (K64).

The protein belongs to the GcvH family. In terms of assembly, the glycine cleavage system is composed of four proteins: P, T, L and H. (R)-lipoate is required as a cofactor.

Functionally, the glycine cleavage system catalyzes the degradation of glycine. The H protein shuttles the methylamine group of glycine from the P protein to the T protein. The polypeptide is Glycine cleavage system H protein (Polynucleobacter necessarius subsp. necessarius (strain STIR1)).